Reading from the N-terminus, the 121-residue chain is Large ribosomal subunit protein uL14 (121 aa).

The protein belongs to the universal ribosomal protein uL14 family. In terms of assembly, part of the 50S ribosomal subunit. Forms a cluster with proteins L3 and L19. In the 70S ribosome, L14 and L19 interact and together make contacts with the 16S rRNA in bridges B5 and B8.

Functionally, binds to 23S rRNA. Forms part of two intersubunit bridges in the 70S ribosome. The protein is Large ribosomal subunit protein uL14 of Prochlorococcus marinus (strain MIT 9303).